The following is a 124-amino-acid chain: Small ribosomal subunit protein uS12 (124 aa).

Position 89 is a 3-methylthioaspartic acid (aspartate 89).

Belongs to the universal ribosomal protein uS12 family. Part of the 30S ribosomal subunit. Contacts proteins S8 and S17. May interact with IF1 in the 30S initiation complex.

Its function is as follows. With S4 and S5 plays an important role in translational accuracy. Functionally, interacts with and stabilizes bases of the 16S rRNA that are involved in tRNA selection in the A site and with the mRNA backbone. Located at the interface of the 30S and 50S subunits, it traverses the body of the 30S subunit contacting proteins on the other side and probably holding the rRNA structure together. The combined cluster of proteins S8, S12 and S17 appears to hold together the shoulder and platform of the 30S subunit. The chain is Small ribosomal subunit protein uS12 from Haemophilus ducreyi (strain 35000HP / ATCC 700724).